The following is a 153-amino-acid chain: 6,7-dimethyl-8-ribityllumazine synthase (153 aa).

5-amino-6-(D-ribitylamino)uracil-binding positions include Phe-22, 56–58 (AFE), and 80–82 (AVI). Residue 85–86 (ST) participates in (2S)-2-hydroxy-3-oxobutyl phosphate binding. The active-site Proton donor is His-88. Phe-113 is a binding site for 5-amino-6-(D-ribitylamino)uracil. Arg-127 is a binding site for (2S)-2-hydroxy-3-oxobutyl phosphate.

It belongs to the DMRL synthase family.

It catalyses the reaction (2S)-2-hydroxy-3-oxobutyl phosphate + 5-amino-6-(D-ribitylamino)uracil = 6,7-dimethyl-8-(1-D-ribityl)lumazine + phosphate + 2 H2O + H(+). The protein operates within cofactor biosynthesis; riboflavin biosynthesis; riboflavin from 2-hydroxy-3-oxobutyl phosphate and 5-amino-6-(D-ribitylamino)uracil: step 1/2. Functionally, catalyzes the formation of 6,7-dimethyl-8-ribityllumazine by condensation of 5-amino-6-(D-ribitylamino)uracil with 3,4-dihydroxy-2-butanone 4-phosphate. This is the penultimate step in the biosynthesis of riboflavin. This Clostridium novyi (strain NT) protein is 6,7-dimethyl-8-ribityllumazine synthase.